A 255-amino-acid chain; its full sequence is Malonyl-[acyl-carrier protein] O-methyltransferase (255 aa).

It belongs to the methyltransferase superfamily.

The catalysed reaction is malonyl-[ACP] + S-adenosyl-L-methionine = malonyl-[ACP] methyl ester + S-adenosyl-L-homocysteine. It functions in the pathway cofactor biosynthesis; biotin biosynthesis. Converts the free carboxyl group of a malonyl-thioester to its methyl ester by transfer of a methyl group from S-adenosyl-L-methionine (SAM). It allows to synthesize pimeloyl-ACP via the fatty acid synthetic pathway. In Porphyromonas gingivalis (strain ATCC BAA-308 / W83), this protein is Malonyl-[acyl-carrier protein] O-methyltransferase.